Consider the following 153-residue polypeptide: MSLIPSFFGGRRSSVFDPFSLDVWDPFKDFPFPSSLSAENSAFVSTRVDWKETPEAHVFKADIPGLKKEEVKLEIQDGRVLQISGERNVEKEDKNDTWHRVERSSGKLVRRFRLPENAKVDQVKASMENGVLTVTVPKEEIKKPDVKAIDISG.

A sHSP domain is found at 39–153 (ENSAFVSTRV…PDVKAIDISG (115 aa)).

It belongs to the small heat shock protein (HSP20) family. Forms oligomeric structures.

The protein resides in the cytoplasm. This is 17.3 kDa class I heat shock protein (HSP17.3-B) from Glycine max (Soybean).